The chain runs to 324 residues: FCS-Like Zinc finger 11 (324 aa).

An FLZ-type zinc finger spans residues 266 to 309; it reads NFLGICNFCNKKLGGGDDIYMYREKSFCSEECRSEEMMIDEEDL.

It belongs to the FLZ family. As to quaternary structure, interacts with KIN10 and KIN11 via its FLZ-type zinc finger domain. Forms heterodimer with FLZ2 in vitro.

The protein resides in the cytoplasm. It localises to the nucleus. May act as an adapter to facilitate the interaction of SnRK1 complex with effector proteins, conferring tissue- and stimulus-type specific differences in the SnRK1 regulation pathway. The protein is FCS-Like Zinc finger 11 of Arabidopsis thaliana (Mouse-ear cress).